The primary structure comprises 231 residues: Ribose-5-phosphate isomerase A (231 aa).

Substrate is bound by residues 28-31 (TGST), 83-86 (DGAD), and 96-99 (KGGG). E105 acts as the Proton acceptor in catalysis. Substrate is bound at residue K123.

Belongs to the ribose 5-phosphate isomerase family. In terms of assembly, homodimer.

It carries out the reaction aldehydo-D-ribose 5-phosphate = D-ribulose 5-phosphate. The protein operates within carbohydrate degradation; pentose phosphate pathway; D-ribose 5-phosphate from D-ribulose 5-phosphate (non-oxidative stage): step 1/1. In terms of biological role, catalyzes the reversible conversion of ribose-5-phosphate to ribulose 5-phosphate. The polypeptide is Ribose-5-phosphate isomerase A (Parvibaculum lavamentivorans (strain DS-1 / DSM 13023 / NCIMB 13966)).